Consider the following 129-residue polypeptide: Cortical cell-delineating protein (129 aa).

A signal peptide (or 21) is located at residues Met-1–Ala-19. An N-linked (GlcNAc...) asparagine glycan is attached at Asn-25. 2 consecutive repeat copies span residues Pro-29–Pro-34 and Pro-35–Pro-40. Positions Pro-29–Pro-40 are 2 X 6 AA tandem repeats of P-V-V-P-T-P.

This sequence to carrot DC2.15 and PEMB3. As to expression, cortical ground meristem of developing roots.

Its function is as follows. Delineates a novel subset of developing cortical cells. It is probably involved in some aspect of transport of molecules to or from the vasculature. This Zea mays (Maize) protein is Cortical cell-delineating protein.